The primary structure comprises 1224 residues: uncharacterized protein (1224 aa).

Disordered regions lie at residues 1–67 (MNQD…SSSI), 111–151 (QQSH…PPPL), 193–270 (QTEL…DPNI), 316–416 (DYNN…TVKK), 430–957 (SDSG…QEEK), and 1078–1167 (SFLP…TSHV). Residues 10-48 (SFHSNNNSNSNHHHSYNNSINSGSSSSGSNNSSNNNSFN) are compositionally biased toward low complexity. Over residues 49–58 (DEIEGGEIQE) the composition is skewed to acidic residues. Composition is skewed to low complexity over residues 126–140 (SSSS…SSSS), 193–212 (QTEL…SSPP), and 228–241 (SAPT…SVSS). Positions 242 to 255 (LTQPQKPKSVQYSQ) are enriched in polar residues. Residues 260–270 (EIREEKVDPNI) show a composition bias toward basic and acidic residues. The segment covering 316 to 338 (DYNNSNSNNSNNNNNNNNSITEN) has biased composition (low complexity). The segment covering 341 to 353 (DKMINNQPSSTNS) has biased composition (polar residues). Low complexity-rich tracts occupy residues 379-413 (TTTT…TTPT) and 430-450 (SDSG…TSTP). Composition is skewed to basic and acidic residues over residues 451 to 585 (KSKD…DKKK) and 630 to 646 (EIDK…KVES). Residues 662–719 (TTTTTTSTSSSSSLPSLSSSSSSLPLPSSSSSSSSSSSSSSSSSSSSSSSSSSSTTST) show a composition bias toward low complexity. Positions 727 to 750 (PPPPPQQPPPPPPQQPPPPPPPIN) are enriched in pro residues. Over residues 755–892 (SEHDKKIIEK…SDRDRDRKDS (138 aa)) the composition is skewed to basic and acidic residues. Residues 893–933 (NSNNNSNNNNNNNNNNNNNNNNNNNNKKDNNNNNNNNNNNN) are compositionally biased toward low complexity. A compositionally biased stretch (basic and acidic residues) spans 948-957 (TPKKTKQEEK). Positions 950–991 (KKTKQEEKLIRSQIDQIKEDAKDLKKLAKELQSKNQNECLEM) form a coiled coil. Composition is skewed to low complexity over residues 1078-1108 (SFLP…TAPL) and 1114-1165 (NPSE…PNTS).

This is an uncharacterized protein from Dictyostelium discoideum (Social amoeba).